Here is a 1087-residue protein sequence, read N- to C-terminus: Ubiquitin-associated protein 2-like (1087 aa).

The residue at position 1 (Met1) is an N-acetylmethionine. Residues Met1–Ala33 form a disordered region. The UBA domain maps to Asp49 to Gly89. The disordered stretch occupies residues Asp92 to Thr234. The segment covering Glu118 to Arg132 has biased composition (basic and acidic residues). A compositionally biased stretch (basic residues) spans Arg133–Ser145. 2 positions are modified to asymmetric dimethylarginine: Arg187 and Arg190. Over residues Asn213–Gly226 the composition is skewed to low complexity. A phosphoserine mark is found at Ser356 and Ser360. Over residues Ala377–Ser389 the composition is skewed to low complexity. Residues Ala377–Lys420 are disordered. Positions Trp390–Leu401 are enriched in polar residues. 2 positions are modified to phosphoserine: Ser410 and Ser416. Phosphothreonine is present on Thr425. A phosphoserine mark is found at Ser439, Ser454, Ser467, Ser470, Ser471, and Ser477. Disordered regions lie at residues Pro440 to Ser493, Ser530 to Leu656, and Thr669 to Gly794. Composition is skewed to low complexity over residues Gln474–Leu485 and Ser534–Ser569. Residues Gly570–Leu656 show a composition bias toward polar residues. Phosphoserine occurs at positions 604, 605, 608, and 609. The segment covering Thr688–Ser784 has biased composition (low complexity). Phosphoserine occurs at positions 852 and 859. The tract at residues Phe865–Ala901 is disordered. The segment covering Pro873–Thr896 has biased composition (low complexity). Omega-N-methylarginine occurs at positions 962 and 969. Val969 and Thr976 each carry N6-acetyllysine. The tract at residues Gln1040–Asn1087 is disordered. Residues Gln1053–Ser1067 are compositionally biased toward low complexity. Polar residues predominate over residues Ile1068–Asn1087.

Interacts with BMI1. Part of a complex consisting of UBAP2L, BMI1 and RNF2. Interacts with G3BP1 (via NTF2 domain); promoting stress granule formation. Acetylated. As to expression, ubiquitous.

The protein resides in the nucleus. Its subcellular location is the chromosome. It localises to the cytoplasm. It is found in the stress granule. Functionally, recruits the ubiquitination machinery to RNA polymerase II for polyubiquitination, removal and degradation, when the transcription-coupled nucleotide excision repair (TC-NER) machinery fails to resolve DNA damage. Plays an important role in the activity of long-term repopulating hematopoietic stem cells (LT-HSCs). Is a regulator of stress granule assembly, required for their efficient formation. Required for proper brain development and neocortex lamination. This is Ubiquitin-associated protein 2-like from Homo sapiens (Human).